The chain runs to 500 residues: UBX domain-containing protein 5 (500 aa).

Low complexity predominate over residues 50-61; it reads SNNTPTPSNSTP. The disordered stretch occupies residues 50–70; that stretch reads SNNTPTPSNSTPMAPTSVDSD. The residue at position 139 (Ser139) is a Phosphoserine. Disordered stretches follow at residues 142-169 and 371-399; these read NQRL…EEND and ESLN…QEPD. The segment covering 148–161 has biased composition (low complexity); it reads TNTNTYINDNSSDS. Positions 415–493 constitute a UBX domain; that stretch reads KPGITTRIQI…GLKNSSLLLE (79 aa).

As to quaternary structure, interacts with CDC48.

It localises to the nucleus. Its subcellular location is the cytoplasm. In terms of biological role, involved in CDC48-dependent protein degradation through the ubiquitin/proteasome pathway. The protein is UBX domain-containing protein 5 (UBX5) of Saccharomyces cerevisiae (strain ATCC 204508 / S288c) (Baker's yeast).